The chain runs to 449 residues: C4-dicarboxylate transport protein (449 aa).

9 helical membrane-spanning segments follow: residues 5–25, 45–65, 77–97, 149–169, 185–205, 231–251, 298–318, 332–352, and 353–373; these read AVFK…VSLG, LIKM…IAGM, LAVL…LIVV, GDML…HSFG, VLFG…FGAM, CVIF…FSII, GYSF…VFIA, TLLV…GSGF, and IVLA…LALI.

It belongs to the dicarboxylate/amino acid:cation symporter (DAACS) (TC 2.A.23) family.

The protein resides in the cell inner membrane. Its function is as follows. Responsible for the transport of dicarboxylates such as succinate, fumarate, and malate from the periplasm across the membrane. This Dechloromonas aromatica (strain RCB) protein is C4-dicarboxylate transport protein.